A 474-amino-acid chain; its full sequence is Hepatocyte nuclear factor 4-alpha (474 aa).

Positions 57–132 (SALCAICGDR…AGMKKEAVQN (76 aa)) form a DNA-binding region, nuclear receptor. 2 NR C4-type zinc fingers span residues 60-80 (CAIC…CDGC) and 96-120 (CRFS…LKKC). A phosphoserine mark is found at Ser142 and Ser143. Tyr144 is modified (phosphotyrosine). Residues 147-377 (SSLPSINALL…NLLQEMLLGG (231 aa)) enclose the NR LBD domain. Thr166 bears the Phosphothreonine mark. Ser167 carries the phosphoserine modification. Glycyl lysine isopeptide (Lys-Gly) (interchain with G-Cter in ubiquitin) cross-links involve residues Lys234 and Lys307. Phosphoserine; by AMPK is present on Ser313. The 9aaTAD motif lies at 368–376 (NLLQEMLLG). Residues 419–447 (EWPRPRGQAATPETPQPSPPGGSGSEPYK) are disordered. A phosphothreonine mark is found at Thr429 and Thr432. Ser436 bears the Phosphoserine mark. At Lys458 the chain carries N6-acetyllysine.

The protein belongs to the nuclear hormone receptor family. NR2 subfamily. In terms of assembly, homodimerization is required for HNF4-alpha to bind to its recognition site. Interacts with CLOCK, BMAL1, CRY1, CRY2, PER1 and PER2. Interacts with NR0B2/SHP; the resulting heterodimer is transcriptionally inactive. Interacts with DDX3X; this interaction disrupts the interaction between HNF4 and NR0B2 that forms inactive heterodimers and enhances the formation of active HNF4 homodimers. In terms of processing, phosphorylated on tyrosine residue(s); phosphorylation is important for its DNA-binding activity. Phosphorylation may directly or indirectly play a regulatory role in the subnuclear distribution. Phosphorylation at Ser-313 by AMPK reduces the ability to form homodimers and bind DNA. Post-translationally, acetylation at Lys-458 lowers transcriptional activation by about two-fold.

The protein resides in the nucleus. Its function is as follows. Transcriptional regulator which controls the expression of hepatic genes during the transition of endodermal cells to hepatic progenitor cells, facilitating the recruitment of RNA pol II to the promoters of target genes. Activates the transcription of CYP2C38. Represses the CLOCK-BMAL1 transcriptional activity and is essential for circadian rhythm maintenance and period regulation in the liver and colon cells. The chain is Hepatocyte nuclear factor 4-alpha (HNF4A) from Homo sapiens (Human).